The chain runs to 248 residues: Fasciclin-like arabinogalactan protein 19 (248 aa).

A signal peptide spans methionine 1 to glycine 29. In terms of domain architecture, FAS1 spans leucine 35–leucine 166. 2 N-linked (GlcNAc...) asparagine glycosylation sites follow: asparagine 114 and asparagine 136. A compositionally biased stretch (low complexity) spans serine 213–glycine 226. The disordered stretch occupies residues serine 213–phenylalanine 248.

Belongs to the fasciclin-like AGP family.

The protein resides in the secreted. In terms of biological role, may be a cell surface adhesion protein. In Arabidopsis thaliana (Mouse-ear cress), this protein is Fasciclin-like arabinogalactan protein 19 (FLA19).